The sequence spans 189 residues: Potassium-transporting ATPase KdpC subunit (189 aa).

A helical transmembrane segment spans residues 10 to 30 (LTLVFCVFFSVCYILVLWIFA).

It belongs to the KdpC family. In terms of assembly, the system is composed of three essential subunits: KdpA, KdpB and KdpC.

It is found in the cell inner membrane. Part of the high-affinity ATP-driven potassium transport (or Kdp) system, which catalyzes the hydrolysis of ATP coupled with the electrogenic transport of potassium into the cytoplasm. This subunit acts as a catalytic chaperone that increases the ATP-binding affinity of the ATP-hydrolyzing subunit KdpB by the formation of a transient KdpB/KdpC/ATP ternary complex. The chain is Potassium-transporting ATPase KdpC subunit from Phocaeicola vulgatus (strain ATCC 8482 / DSM 1447 / JCM 5826 / CCUG 4940 / NBRC 14291 / NCTC 11154) (Bacteroides vulgatus).